The following is a 249-amino-acid chain: Pleckstrin homology domain-containing family F member 2 (249 aa).

Serine 16 carries the post-translational modification Phosphoserine. Residues 35-131 (VLIGEGVLTK…WMNHINKCVT (97 aa)) form the PH domain. At lysine 44 the chain carries N6-acetyllysine. The FYVE-type zinc finger occupies 152–212 (DSEATVCMRC…ICDFCYDLLS (61 aa)). 8 residues coordinate Zn(2+): cysteine 158, cysteine 161, cysteine 175, cysteine 178, cysteine 183, cysteine 186, cysteine 204, and cysteine 207. Positions 221–233 (PTRSDSYSQSLKS) are enriched in polar residues. The tract at residues 221-249 (PTRSDSYSQSLKSPLNDASDDDDDDDSSD) is disordered. Over residues 238–249 (ASDDDDDDDSSD) the composition is skewed to acidic residues. Serine 239 and serine 248 each carry phosphoserine.

In terms of assembly, may interact with EEA1. In terms of tissue distribution, expressed in brain, stomach and thymus, as well as in kidney, spleen, and skeletal muscle. Also expressed in peripheral blood mononuclear cells and dendritic cells.

The protein resides in the early endosome membrane. The protein localises to the endoplasmic reticulum. Functionally, may play a role in early endosome fusion upstream of RAB5, hence regulating receptor trafficking and fluid-phase transport. Enhances cellular sensitivity to TNF-induced apoptosis. The chain is Pleckstrin homology domain-containing family F member 2 (Plekhf2) from Mus musculus (Mouse).